A 45-amino-acid chain; its full sequence is Large ribosomal subunit protein bL34 (45 aa).

Belongs to the bacterial ribosomal protein bL34 family.

The protein is Large ribosomal subunit protein bL34 (rpmH) of Streptomyces coelicolor (strain ATCC BAA-471 / A3(2) / M145).